The primary structure comprises 500 residues: Glycerol kinase (500 aa).

T15 is an ADP binding site. Residues T15, T16, and S17 each coordinate ATP. Position 15 (T15) interacts with sn-glycerol 3-phosphate. R19 contacts ADP. Residues R85, E86, Y137, and D245 each contribute to the sn-glycerol 3-phosphate site. 5 residues coordinate glycerol: R85, E86, Y137, D245, and Q246. ADP is bound by residues T267 and G310. T267, G310, Q314, and G411 together coordinate ATP. Residues G411 and N415 each coordinate ADP.

This sequence belongs to the FGGY kinase family.

The enzyme catalyses glycerol + ATP = sn-glycerol 3-phosphate + ADP + H(+). The protein operates within polyol metabolism; glycerol degradation via glycerol kinase pathway; sn-glycerol 3-phosphate from glycerol: step 1/1. Its activity is regulated as follows. Inhibited by fructose 1,6-bisphosphate (FBP). Its function is as follows. Key enzyme in the regulation of glycerol uptake and metabolism. Catalyzes the phosphorylation of glycerol to yield sn-glycerol 3-phosphate. The chain is Glycerol kinase from Aeromonas salmonicida (strain A449).